The primary structure comprises 101 residues: Large ribosomal subunit protein eL43 (101 aa).

A C4-type zinc finger spans residues 40 to 62 (CPSCRSLVRLQRIAFGIWKCPKC).

It belongs to the eukaryotic ribosomal protein eL43 family. Zn(2+) serves as cofactor.

This chain is Large ribosomal subunit protein eL43, found in Pyrobaculum neutrophilum (strain DSM 2338 / JCM 9278 / NBRC 100436 / V24Sta) (Thermoproteus neutrophilus).